A 670-amino-acid polypeptide reads, in one-letter code: Protein angel homolog 1 (670 aa).

Serine 77 and serine 105 each carry phosphoserine.

This sequence belongs to the CCR4/nocturin family.

The chain is Protein angel homolog 1 (ANGEL1) from Homo sapiens (Human).